The sequence spans 109 residues: Large ribosomal subunit protein uL24 (109 aa).

This sequence belongs to the universal ribosomal protein uL24 family. In terms of assembly, part of the 50S ribosomal subunit.

One of two assembly initiator proteins, it binds directly to the 5'-end of the 23S rRNA, where it nucleates assembly of the 50S subunit. Functionally, one of the proteins that surrounds the polypeptide exit tunnel on the outside of the subunit. This chain is Large ribosomal subunit protein uL24, found in Ehrlichia canis (strain Jake).